The sequence spans 518 residues: Motile sperm domain-containing protein 2 (518 aa).

At 1–496 (MAENNAQNKA…QLQRSIWFQQ (496 aa)) the chain is on the cytoplasmic side. Positions 85-239 (IPRWLLELGG…HMGGTDPFKY (155 aa)) constitute a CRAL-TRIO domain. The segment at 252–312 (PLCENGPIAS…KDENEKVDSK (61 aa)) is disordered. 2 stretches are compositionally biased toward basic and acidic residues: residues 265-279 (TSSK…KETL) and 300-312 (VSKK…VDSK). Positions 327-445 (LLHISPAEEL…MEHRLRCHTV (119 aa)) constitute an MSP domain. The required for FFAT motif binding and phosphorylated FFAT motif binding stretch occupies residues 365 to 366 (RT). Residues 497–518 (LLLALTMVLLDFVVSFFYSLYN) form a helical; Anchor for type IV membrane protein membrane-spanning segment.

Homooligomer. Interacts (via MSP domain) with STARD3NL (via FFAT motif), RMDN3 (via FFAT motif), OSBPL1A (via FFAT motif) and CERT1 (via FFAT motif). Interacts (via MSP domain) with STARD3 (via phosphorylated FFAT motif); this interaction depends on the critical phosphorylation of STARD3 on 'Ser-209'. Interacts with RB1CC1 (via phosphorylated FFAT motif), MIGA2 (via phosphorylated FFAT motif) and OSBPL1A (via FFAT motif).

The protein localises to the endoplasmic reticulum membrane. Functionally, endoplasmic reticulum-anchored protein that mediates the formation of contact sites between the endoplasmic (ER) and endosomes, mitochondria or Golgi through interaction with conventional- and phosphorylated-FFAT-containing organelle-bound proteins. In addition, forms endoplasmic reticulum (ER)-lipid droplets (LDs) contacts through a direct protein-membrane interaction and participates in LDs homeostasis. The attachment mechanism involves an amphipathic helix that has an affinity for lipid packing defects present at the surface of LDs. Promotes migration of primary monocytes and neutrophils, in response to various chemokines. This Mus musculus (Mouse) protein is Motile sperm domain-containing protein 2.